Consider the following 634-residue polypeptide: AAl-toxin cluster-specific transcription factor ALT13 (634 aa).

The segment at residues 30-56 (CENCKRRKVRCSGANPCEQCLKVNVHC) is a DNA-binding region (zn(2)-C6 fungal-type). The tract at residues 66-89 (RRSVPNSGADKNNQQGDTDRHNGA) is disordered. Positions 69-81 (VPNSGADKNNQQG) are enriched in polar residues.

It is found in the nucleus. Functionally, transcription factor that regulates the expression of the gene cluster that mediates the biosynthesis of AAL-toxins, sphinganine-analog mycotoxins responsible for Alternaria stem canker on tomato by the tomato pathotype. The polypeptide is AAl-toxin cluster-specific transcription factor ALT13 (Alternaria alternata (Alternaria rot fungus)).